Here is a 453-residue protein sequence, read N- to C-terminus: MSHDSEPQPVTATPGGPLNGSLKPPGDKSISHRAMILGLLAIGETQVEGLLEGDDVLRTAAAAKALGAQITREGEGRWRIVGVGIGGMQDPDGVLDFGNAGTGSRLMMGVVGGQPVTATFDGDASLRKRPMRRILDPILKMGAEIVSEAEGGRVPLTLRGPREAIPIRYELPVASAQIKSAVLLAGLNAPGTTTVIEKAASRDHTERMLHLFGAEVTVTPSGEGGHGRTVTLTGQPTLRGTDVVVPADPSSAAFPLVAALIVPGSEVILRGVMMNPLRTGLITTLIEMGADIERLDEREEGGETVADLRVRASRLKGVDVPAERAPSMIDEYPILAVAASFAEGTTRMNGLHELRVKESDRLAAVAAGLAANGVTHAIEGDDLIVTGNGQAPAGGGTVATHLDHRIAMAFLVLGLAAKSPVTVDDGAMIATSFPSFRPTMLALGARIEDGAAA.

The disordered stretch occupies residues 1–27 (MSHDSEPQPVTATPGGPLNGSLKPPGD). 3 residues coordinate 3-phosphoshikimate: K28, S29, and R33. K28 lines the phosphoenolpyruvate pocket. Positions 101 and 129 each coordinate phosphoenolpyruvate. 3-phosphoshikimate-binding residues include S175, Q177, D330, and K357. Q177 lines the phosphoenolpyruvate pocket. D330 acts as the Proton acceptor in catalysis. Residues R361 and R405 each coordinate phosphoenolpyruvate.

Belongs to the EPSP synthase family. As to quaternary structure, monomer.

The protein resides in the cytoplasm. The enzyme catalyses 3-phosphoshikimate + phosphoenolpyruvate = 5-O-(1-carboxyvinyl)-3-phosphoshikimate + phosphate. Its pathway is metabolic intermediate biosynthesis; chorismate biosynthesis; chorismate from D-erythrose 4-phosphate and phosphoenolpyruvate: step 6/7. Functionally, catalyzes the transfer of the enolpyruvyl moiety of phosphoenolpyruvate (PEP) to the 5-hydroxyl of shikimate-3-phosphate (S3P) to produce enolpyruvyl shikimate-3-phosphate and inorganic phosphate. This is 3-phosphoshikimate 1-carboxyvinyltransferase from Methylorubrum extorquens (strain CM4 / NCIMB 13688) (Methylobacterium extorquens).